Consider the following 236-residue polypeptide: Sperm flagellar protein 1 (236 aa).

One can recognise a Calponin-homology (CH) domain in the interval 7 to 112; that stretch reads EEALHQLYLW…VLIPLRQRLE (106 aa). Positions 115-176 are disordered; that stretch reads QRRRKQGAGS…PRPPAYNRAL (62 aa). Residues 183 to 236 form an essential for homodimerization and microtubule bundling activity region; the sequence is VLQIAEKEQELLASQETVQVLQMKVRRLEHLLQLKNVRIEDLSRRLQQAERKQR.

As to quaternary structure, homodimer. Interacts with actin, TJP1, CGN and CDH1. Expressed in the intestinal epithelial cells (at protein level).

The protein localises to the cytoplasm. The protein resides in the cell projection. It is found in the cilium. It localises to the flagellum. Its subcellular location is the cytoskeleton. The protein localises to the cilium axoneme. The protein resides in the apical cell membrane. It is found in the basolateral cell membrane. It localises to the stress fiber. Its subcellular location is the microvillus. The protein localises to the lamellipodium. The protein resides in the filopodium. Functionally, microtubule-associated protein involved in the stabilization of microtubules along the axis of migration during radial intercalation. Promotes the establishment and stabilization of an axis of microtubules required for the active migration of cells into the outer epithelium. Microtubule-associated protein that promotes microtubule bundling and stabilizes microtubules against depolymerization in response to cold shock. Essential for ciliary central apparatus formation which requires both its microtubule-binding and bundling activities and for ciliary localization of HYDIN and SPAG6 in ependymal cilia. Binds actin in intestinal epithelial cells (IECs), essential for IECs survival and contributes to formation of filopodia and lamellipodia in migrating IECs. Regulates planar cell polarity signaling pathway and asymmetric microtubule accumulation in ciliated epithelia. The chain is Sperm flagellar protein 1 (SPEF1) from Homo sapiens (Human).